Reading from the N-terminus, the 175-residue chain is Ribosome maturation factor RimM (175 aa).

One can recognise a PRC barrel domain in the interval 96–175 (EGDYYWHDLI…TITVDWDAGF (80 aa)).

Belongs to the RimM family. In terms of assembly, binds ribosomal protein uS19.

The protein localises to the cytoplasm. In terms of biological role, an accessory protein needed during the final step in the assembly of 30S ribosomal subunit, possibly for assembly of the head region. Essential for efficient processing of 16S rRNA. May be needed both before and after RbfA during the maturation of 16S rRNA. It has affinity for free ribosomal 30S subunits but not for 70S ribosomes. This chain is Ribosome maturation factor RimM, found in Actinobacillus pleuropneumoniae serotype 5b (strain L20).